The sequence spans 173 residues: Large ribosomal subunit protein uL10 (173 aa).

It belongs to the universal ribosomal protein uL10 family. As to quaternary structure, part of the ribosomal stalk of the 50S ribosomal subunit. The N-terminus interacts with L11 and the large rRNA to form the base of the stalk. The C-terminus forms an elongated spine to which L12 dimers bind in a sequential fashion forming a multimeric L10(L12)X complex.

Functionally, forms part of the ribosomal stalk, playing a central role in the interaction of the ribosome with GTP-bound translation factors. The sequence is that of Large ribosomal subunit protein uL10 from Bifidobacterium longum (strain DJO10A).